Here is a 448-residue protein sequence, read N- to C-terminus: Senescence/dehydration-associated protein At4g35985, chloroplastic (448 aa).

A disordered region spans residues 1 to 36 (MECSATPPKLYPTVDTSTTVAPLPKSSSSSSSTNNN). Residues 1 to 56 (MECSATPPKLYPTVDTSTTVAPLPKSSSSSSSTNNNNLYPSINVNDLVNNIFPDPT) constitute a chloroplast transit peptide. Positions 26 to 36 (SSSSSSSTNNN) are enriched in low complexity. The Senescence domain maps to 248 to 416 (IAAGSGQLIK…AWTVFKIRQA (169 aa)). Positions 422-448 (AMKPSSLAKTVVKTAAKERKKGKKSSK) are disordered. Residues 439 to 448 (ERKKGKKSSK) show a composition bias toward basic residues.

As to expression, expressed in leaves (especially in midribs and trichomes), apical meristemic regions, stems, roots and flowers.

It localises to the plastid. Its subcellular location is the chloroplast. The polypeptide is Senescence/dehydration-associated protein At4g35985, chloroplastic (Arabidopsis thaliana (Mouse-ear cress)).